Here is a 394-residue protein sequence, read N- to C-terminus: Glycerol-3-phosphate dehydrogenase [NAD(+)] 2 (394 aa).

NAD(+) contacts are provided by residues 41 to 46 (GSGNWG), Lys-152, and Ala-185. Lys-152 serves as a coordination point for substrate. Catalysis depends on Lys-243, which acts as the Proton acceptor. Residues Arg-308 and Gln-337 each coordinate NAD(+). Substrate is bound at residue 308–309 (RN).

This sequence belongs to the NAD-dependent glycerol-3-phosphate dehydrogenase family.

The enzyme catalyses sn-glycerol 3-phosphate + NAD(+) = dihydroxyacetone phosphate + NADH + H(+). This Cyberlindnera jadinii (Torula yeast) protein is Glycerol-3-phosphate dehydrogenase [NAD(+)] 2 (gpd2).